Here is a 133-residue protein sequence, read N- to C-terminus: Small ribosomal subunit protein eS24z (133 aa).

A disordered region spans residues Lys104–Lys133. Residues Ile109–Thr125 show a composition bias toward basic residues.

The protein belongs to the eukaryotic ribosomal protein eS24 family.

The protein is Small ribosomal subunit protein eS24z (RPS24A) of Arabidopsis thaliana (Mouse-ear cress).